We begin with the raw amino-acid sequence, 87 residues long: Small ribosomal subunit protein eS21 (87 aa).

This sequence belongs to the eukaryotic ribosomal protein eS21 family. As to quaternary structure, component of the small ribosomal subunit. Mature ribosomes consist of a small (40S) and a large (60S) subunit. The 40S subunit contains about 33 different proteins and 1 molecule of RNA (18S). The 60S subunit contains about 49 different proteins and 3 molecules of RNA (25S, 5.8S and 5S).

The protein resides in the cytoplasm. In terms of biological role, required for the processing of the 20S rRNA-precursor to mature 18S rRNA in a late step of the maturation of 40S ribosomal subunits. Has a physiological role leading to 18S rRNA stability. This Candida glabrata (strain ATCC 2001 / BCRC 20586 / JCM 3761 / NBRC 0622 / NRRL Y-65 / CBS 138) (Yeast) protein is Small ribosomal subunit protein eS21 (RPS21).